A 370-amino-acid polypeptide reads, in one-letter code: Cytochrome b (370 aa).

Helical transmembrane passes span F30–F50, W74–F96, V109–V129, and F175–I195. 2 residues coordinate heme b: H80 and H94. 2 residues coordinate heme b: H179 and H193. H198 serves as a coordination point for a ubiquinone. A run of 4 helical transmembrane segments spans residues Y221 to L240, V284 to N304, F316 to V336, and I342 to F362.

This sequence belongs to the cytochrome b family. In terms of assembly, the main subunits of complex b-c1 are: cytochrome b, cytochrome c1 and the Rieske protein. Heme b is required as a cofactor.

The protein localises to the mitochondrion inner membrane. Its function is as follows. Component of the ubiquinol-cytochrome c reductase complex (complex III or cytochrome b-c1 complex) that is part of the mitochondrial respiratory chain. The b-c1 complex mediates electron transfer from ubiquinol to cytochrome c. Contributes to the generation of a proton gradient across the mitochondrial membrane that is then used for ATP synthesis. This is Cytochrome b from Caenorhabditis elegans.